The primary structure comprises 749 residues: Cytosolic phospholipase A2 (749 aa).

The segment at 1-178 (MSFIDPYQHI…MKKLLGPKNS (178 aa)) is phospholipid binding. Phosphoserine is present on S2. The C2 domain maps to 6 to 122 (PYQHIIVEHH…KVGEKKQVPF (117 aa)). D40, T41, D43, N65, D93, A94, and N95 together coordinate Ca(2+). Residues 140–740 (SSPDLRFSMA…SSVEARRFFN (601 aa)) form the PLA2c domain. S228 serves as the catalytic Nucleophile. T268 carries the post-translational modification Phosphothreonine. A disordered region spans residues 426–458 (AKHIVSNDSSDSDDESQGPKGTEHEEAEREYQN). 3 positions are modified to phosphoserine: S434, S435, and S437. A compositionally biased stretch (basic and acidic residues) spans 446-457 (GTEHEEAEREYQ). S505 carries the post-translational modification Phosphoserine; by MAPK. S515 carries the post-translational modification Phosphoserine. K541 participates in a covalent cross-link: Glycyl lysine isopeptide (Lys-Gly) (interchain with G-Cter in SUMO2). The active-site Proton acceptor is the D549. A Glycyl lysine isopeptide (Lys-Gly) (interchain with G-Cter in SUMO2) cross-link involves residue K606. Phosphoserine is present on residues S727 and S729.

Interacts with KAT5. In terms of processing, phosphorylated at both Ser-505 and Ser-727 in response to mitogenic stimuli. As to expression, detected in granulosa cells after stimulation with chorionic gonadotropin (at protein level).

The protein localises to the cytoplasm. It localises to the golgi apparatus membrane. The protein resides in the nucleus envelope. The catalysed reaction is a 1,2-diacyl-sn-glycero-3-phosphocholine + H2O = a 1-acyl-sn-glycero-3-phosphocholine + a fatty acid + H(+). The enzyme catalyses a 1-O-alkyl-2-acyl-sn-glycero-3-phosphocholine + H2O = a 1-O-alkyl-sn-glycero-3-phosphocholine + a fatty acid + H(+). It catalyses the reaction a 1-acyl-sn-glycero-3-phosphocholine + H2O = sn-glycerol 3-phosphocholine + a fatty acid + H(+). It carries out the reaction 1-hexadecanoyl-2-(5Z,8Z,11Z,14Z-eicosatetraenoyl)-sn-glycero-3-phosphocholine + H2O = 1-hexadecanoyl-sn-glycero-3-phosphocholine + (5Z,8Z,11Z,14Z)-eicosatetraenoate + H(+). The catalysed reaction is 1,2-di-(5Z,8Z,11Z,14Z-eicosatetraenoyl)-sn-glycero-3-phosphocholine + H2O = 1-(5Z,8Z,11Z,14Z-eicosatetraenoyl)-sn-glycero-3-phosphocholine + (5Z,8Z,11Z,14Z)-eicosatetraenoate + H(+). The enzyme catalyses 1-octadecanoyl-2-(5Z,8Z,11Z,14Z-eicosatetraenoyl)-sn-glycero-3-phosphocholine + H2O = 1-octadecanoyl-sn-glycero-3-phosphocholine + (5Z,8Z,11Z,14Z)-eicosatetraenoate + H(+). It catalyses the reaction 1-hexadecanoyl-2-(9Z,12Z-octadecadienoyl)-sn-glycero-3-phosphocholine + H2O = (9Z,12Z)-octadecadienoate + 1-hexadecanoyl-sn-glycero-3-phosphocholine + H(+). It carries out the reaction 1-octadecanoyl-2-(9Z,12Z,15Z-octadecatrienoyl)-sn-glycero-3-phosphocholine + H2O = (9Z,12Z,15Z)-octadecatrienoate + 1-octadecanoyl-sn-glycero-3-phosphocholine + H(+). The catalysed reaction is 1-(5Z,8Z,11Z,14Z-eicosatetraenoyl)-2-hexadecanoyl-sn-glycero-3-phosphocholine + H2O = 1-(5Z,8Z,11Z,14Z-eicosatetraenoyl)-sn-glycero-3-phosphocholine + hexadecanoate + H(+). The enzyme catalyses 1-O-hexadecyl-2-(5Z,8Z,11Z,14Z)-eicosatetraenoyl-sn-glycero-3-phosphocholine + H2O = 1-O-hexadecyl-sn-glycero-3-phosphocholine + (5Z,8Z,11Z,14Z)-eicosatetraenoate + H(+). It catalyses the reaction 1,2-di-(9Z-octadecenoyl)-sn-glycero-3-phospho-(1'-sn-glycerol) + H2O = 1-(9Z-octadecenoyl)-sn-glycero-3-phospho-(1'-sn-glycerol) + (9Z)-octadecenoate + H(+). It carries out the reaction 1-octadecanoyl-2-(5Z,8Z,11Z,14Z-eicosatetraenoyl)-sn-glycero-3-phosphate + H2O = 1-octadecanoyl-sn-glycero-3-phosphate + (5Z,8Z,11Z,14Z)-eicosatetraenoate + H(+). The catalysed reaction is 1-hexadecanoyl-sn-glycero-3-phosphocholine + H2O = sn-glycerol 3-phosphocholine + hexadecanoate + H(+). The enzyme catalyses 2-(prostaglandin E2)-sn-glycero-3-phosphoethanolamine + H2O = sn-glycero-3-phosphoethanolamine + prostaglandin E2 + H(+). It catalyses the reaction 2-[(15S)-hydroxy-(5Z,8Z,11Z,13E)-eicosatetraenoyl]-sn-glycero-3-phosphocholine + H2O = (15S)-hydroxy-(5Z,8Z,11Z,13E)-eicosatetraenoate + sn-glycerol 3-phosphocholine + H(+). It carries out the reaction 2-[(15R)-hydroxy-(5Z,8Z,11Z,13E)-eicosatetraenoyl]-sn-glycero-3-phosphocholine + H2O = (15R)-hydroxy-(5Z,8Z,11Z,13E)-eicosatetraenoate + sn-glycerol 3-phosphocholine + H(+). The catalysed reaction is 2-(prostaglandin E2)-sn-glycero-3-phosphocholine + H2O = prostaglandin E2 + sn-glycerol 3-phosphocholine + H(+). The enzyme catalyses 2-[(11R)-hydroxy-(5Z,8Z,12E,14Z)-eicosatetraenoyl]-sn-glycero-3-phosphocholine + H2O = (11R)-hydroxy-(5Z,8Z,12E,14Z)-eicosatetraenoate + sn-glycerol 3-phosphocholine + H(+). It catalyses the reaction 1-(5Z,8Z,11Z,14Z-eicosatetraenoyl)-2-O-hexadecyl-sn-glycero-3-phosphocholine + H2O = 2-O-hexadecyl-sn-glycero-3-phosphocholine + (5Z,8Z,11Z,14Z)-eicosatetraenoate + H(+). It carries out the reaction 1-octadecanoyl-2-(5Z,8Z,11Z,14Z-eicosatetraenoyl)-sn-glycero-3-phosphocholine + glycerol = 1-(5Z,8Z,11Z,14Z-eicosatetraenoyl)-glycerol + 1-octadecanoyl-sn-glycero-3-phosphocholine. The catalysed reaction is 1-octadecanoyl-2-(9Z,12Z,15Z-octadecatrienoyl)-sn-glycero-3-phosphocholine + glycerol = 1-(9Z,12Z,15Z-octadecatrienoyl)-glycerol + 1-octadecanoyl-sn-glycero-3-phosphocholine. It functions in the pathway membrane lipid metabolism; glycerophospholipid metabolism. The protein operates within lipid metabolism; arachidonate metabolism. It participates in lipid metabolism; prostaglandin biosynthesis. Its pathway is lipid metabolism; leukotriene B4 biosynthesis. Its activity is regulated as follows. Activated by cytosolic calcium, which is necessary for binding to membrane lipids. Activated by phosphorylation in response to mitogenic stimuli. Its function is as follows. Has primarily calcium-dependent phospholipase and lysophospholipase activities, with a major role in membrane lipid remodeling and biosynthesis of lipid mediators of the inflammatory response. Plays an important role in embryo implantation and parturition through its ability to trigger prostanoid production. Preferentially hydrolyzes the ester bond of the fatty acyl group attached at sn-2 position of phospholipids (phospholipase A2 activity). Selectively hydrolyzes sn-2 arachidonoyl group from membrane phospholipids, providing the precursor for eicosanoid biosynthesis via the cyclooxygenase pathway. In an alternative pathway of eicosanoid biosynthesis, hydrolyzes sn-2 fatty acyl chain of eicosanoid lysophopholipids to release free bioactive eicosanoids. Hydrolyzes the ester bond of the fatty acyl group attached at sn-1 position of phospholipids (phospholipase A1 activity) only if an ether linkage rather than an ester linkage is present at the sn-2 position. This hydrolysis is not stereospecific. Has calcium-independent phospholipase A2 and lysophospholipase activities in the presence of phosphoinositides. Has O-acyltransferase activity. Catalyzes the transfer of fatty acyl chains from phospholipids to a primary hydroxyl group of glycerol (sn-1 or sn-3), potentially contributing to monoacylglycerol synthesis. This Bos taurus (Bovine) protein is Cytosolic phospholipase A2 (PLA2G4A).